The primary structure comprises 303 residues: N-acetyl-D-glucosamine kinase (303 aa).

Residues 4–11 (GFDMGGTK) and 133–140 (GVGGGLIV) each bind ATP. Zn(2+)-binding residues include histidine 157, cysteine 177, cysteine 179, and cysteine 184.

This sequence belongs to the ROK (NagC/XylR) family. NagK subfamily.

The enzyme catalyses N-acetyl-D-glucosamine + ATP = N-acetyl-D-glucosamine 6-phosphate + ADP + H(+). It functions in the pathway cell wall biogenesis; peptidoglycan recycling. In terms of biological role, catalyzes the phosphorylation of N-acetyl-D-glucosamine (GlcNAc) derived from cell-wall degradation, yielding GlcNAc-6-P. This is N-acetyl-D-glucosamine kinase from Yersinia enterocolitica serotype O:8 / biotype 1B (strain NCTC 13174 / 8081).